A 304-amino-acid chain; its full sequence is Flagellin (304 aa).

The protein belongs to the bacterial flagellin family. In terms of assembly, interacts with FliW in a 1:1 complex. Forms a 3-way complex of Hag, FliS and FliW, in which Flis and FliW do not directly interact.

Its subcellular location is the secreted. It localises to the bacterial flagellum. The protein localises to the cell wall. Functionally, flagellin is the subunit which polymerizes to form the filaments of bacterial flagella. Assembly into flagella requires FliW. Acts as a homeostatic autoinhibitory regulator to control its own cytoplasmic levels. Partner switching by flagellin between FliW and CsrA provides a flagellar assembly checkpoint to tightly control the timing of flagellin synthesis. Flagellin binds to assembly factor FliW, freeing translation regulator CsrA to repress translation of the flagellin mRNA. When the flagellar hook is assembled flagellin is secreted, depleting intracellular flagellin, which frees FliW to interact with CsrA. This derepresses flagellin translation and provides protein for flagellar assembly. Once the flagellar filament is completed cytoplasmic flagellin levels rise and CsrA translation repression of flagellin reinitiates. This Bacillus subtilis (strain 168) protein is Flagellin.